Reading from the N-terminus, the 78-residue chain is uncharacterized protein (78 aa).

This is an uncharacterized protein from Mycoplasma (Bacteriophage L2).